Consider the following 176-residue polypeptide: uncharacterized protein (176 aa).

The interval 71–176 (RDDMSSDSDG…YSTDDDEDDY (106 aa)) is disordered. 2 stretches are compositionally biased toward low complexity: residues 77–87 (DSDGPAASPPG) and 100–109 (SYSSSDSSAR). Residues 140-152 (KARRPARKKKRIG) are compositionally biased toward basic residues.

This is an uncharacterized protein from Orgyia pseudotsugata multicapsid polyhedrosis virus (OpMNPV).